Here is a 122-residue protein sequence, read N- to C-terminus: Small ribosomal subunit protein bS6 (122 aa).

The protein belongs to the bacterial ribosomal protein bS6 family.

Its function is as follows. Binds together with bS18 to 16S ribosomal RNA. This is Small ribosomal subunit protein bS6 from Trichlorobacter lovleyi (strain ATCC BAA-1151 / DSM 17278 / SZ) (Geobacter lovleyi).